We begin with the raw amino-acid sequence, 509 residues long: Histidine ammonia-lyase (509 aa).

A cross-link (5-imidazolinone (Ala-Gly)) is located at residues 142-144 (ASG). The residue at position 143 (Ser143) is a 2,3-didehydroalanine (Ser).

Belongs to the PAL/histidase family. Post-translationally, contains an active site 4-methylidene-imidazol-5-one (MIO), which is formed autocatalytically by cyclization and dehydration of residues Ala-Ser-Gly.

It is found in the cytoplasm. The enzyme catalyses L-histidine = trans-urocanate + NH4(+). It participates in amino-acid degradation; L-histidine degradation into L-glutamate; N-formimidoyl-L-glutamate from L-histidine: step 1/3. The sequence is that of Histidine ammonia-lyase from Pseudomonas aeruginosa (strain LESB58).